Consider the following 176-residue polypeptide: ATP-dependent protease subunit HslV (176 aa).

Threonine 2 is an active-site residue. Na(+) contacts are provided by alanine 157, cysteine 160, and threonine 163.

Belongs to the peptidase T1B family. HslV subfamily. As to quaternary structure, a double ring-shaped homohexamer of HslV is capped on each side by a ring-shaped HslU homohexamer. The assembly of the HslU/HslV complex is dependent on binding of ATP.

The protein resides in the cytoplasm. It catalyses the reaction ATP-dependent cleavage of peptide bonds with broad specificity.. Allosterically activated by HslU binding. Functionally, protease subunit of a proteasome-like degradation complex believed to be a general protein degrading machinery. The polypeptide is ATP-dependent protease subunit HslV (Buchnera aphidicola subsp. Schizaphis graminum (strain Sg)).